Here is a 59-residue protein sequence, read N- to C-terminus: Movement protein TGBp3 (59 aa).

Topologically, residues 1 to 3 (MHL) are lumenal. A helical membrane pass occupies residues 4–21 (AIVGALTLVLTLFVLHYT). Residues 22 to 59 (TKDDRCYILINGHSAFTNCPASPDLAKVISQLKPHNHG) lie on the Cytoplasmic side of the membrane.

Belongs to the Tymovirales TGBp3 protein family.

It is found in the host endoplasmic reticulum membrane. Its function is as follows. Plays a role in viral cell-to-cell propagation, by facilitating genome transport to neighboring plant cells through plasmosdesmata. May induce the formation of granular vesicles derived from the Endoplasmic reticulum, which align on actin filaments. This is Movement protein TGBp3 from Chenopodium album (Fat hen).